We begin with the raw amino-acid sequence, 532 residues long: MAGIFIYGLSPSFCPDVVAVNVSHIFLQMALWRSSDNLVYLPPTPVSKVLSTDDYVTRTNIYYYAGSSRLLTVGHPYFAIPKSSNSKMDIPKVSAFQYRVFRVRLPDPNKFGLPDARIYNPDAERLVWACTGVEVGRGLPLGVGLSGHPLYNKLDDTENSNIAHGDIGKDSRDNISVDNKQTQLCIVGCTPPMGEHWGKGTPCKQNASPGDCPPLELITAPIQDGDMVDTGYGAMDFGNLQSNKSDVPLDICQTTCKYPDYLGMAAEPYGDSMFFYLRKEQLFARHFLNRAGMAGDTVPDALYIKGDSQSGGRDKIGSAVYCPTPSGSMVTSETQLFNKPYWLRRAQGHNNGICWANQLFVTVVDTTRSTNMTLCVSTETSATYDATKFKEYLRHGEEYDLQFIFQLCKVTLTPEIMAYLHTMNSTLLEDWNFGLTLPPSTSLEDTYRFLTSSAITCQKDAPPTEKQDPYAKLNFWDVDLKDRFSLDLSQFPLGRKFLMQLGVGTRSSISVRKRSATTTSRTAAAKRKRTKK.

Residues arginine 512–lysine 532 form a disordered region.

It belongs to the papillomaviridae L1 protein family. As to quaternary structure, self-assembles into homopentamers. The capsid has an icosahedral symmetry and consists of 72 capsomers, with each capsomer being a pentamer of L1. Interacts with the minor capsid protein L2; this interaction is necessary for viral genome encapsidation. Interacts with protein E2; this interaction enhances E2-dependent replication and transcription activation.

The protein resides in the virion. It is found in the host nucleus. In terms of biological role, forms an icosahedral capsid with a T=7 symmetry and a 50 nm diameter. The capsid is composed of 72 pentamers linked to each other by disulfide bonds and associated with L2 proteins. Binds to heparan sulfate proteoglycans on cell surface of basal layer keratinocytes to provide initial virion attachment. This binding mediates a conformational change in the virus capsid that facilitates efficient infection. The virion enters the host cell via endocytosis. During virus trafficking, L1 protein dissociates from the viral DNA and the genomic DNA is released to the host nucleus. The virion assembly takes place within the cell nucleus. Encapsulates the genomic DNA together with protein L2. The protein is Major capsid protein L1 of Human papillomavirus 3.